The chain runs to 376 residues: Succinyl-diaminopimelate desuccinylase (376 aa).

Histidine 66 lines the Zn(2+) pocket. Aspartate 68 is an active-site residue. Aspartate 99 is a binding site for Zn(2+). Glutamate 133 serves as the catalytic Proton acceptor. Zn(2+) is bound by residues glutamate 134, glutamate 162, and histidine 348.

It belongs to the peptidase M20A family. DapE subfamily. As to quaternary structure, homodimer. It depends on Zn(2+) as a cofactor. Requires Co(2+) as cofactor.

It carries out the reaction N-succinyl-(2S,6S)-2,6-diaminopimelate + H2O = (2S,6S)-2,6-diaminopimelate + succinate. It participates in amino-acid biosynthesis; L-lysine biosynthesis via DAP pathway; LL-2,6-diaminopimelate from (S)-tetrahydrodipicolinate (succinylase route): step 3/3. Its function is as follows. Catalyzes the hydrolysis of N-succinyl-L,L-diaminopimelic acid (SDAP), forming succinate and LL-2,6-diaminopimelate (DAP), an intermediate involved in the bacterial biosynthesis of lysine and meso-diaminopimelic acid, an essential component of bacterial cell walls. The polypeptide is Succinyl-diaminopimelate desuccinylase (Xanthomonas oryzae pv. oryzae (strain MAFF 311018)).